The chain runs to 437 residues: Enolase (437 aa).

(2R)-2-phosphoglycerate is bound at residue Gln162. The active-site Proton donor is Glu204. Residues Asp251, Glu297, and Asp324 each coordinate Mg(2+). Residues Lys349, Arg378, Ser379, and Lys400 each contribute to the (2R)-2-phosphoglycerate site. Lys349 functions as the Proton acceptor in the catalytic mechanism.

The protein belongs to the enolase family. It depends on Mg(2+) as a cofactor.

The protein localises to the cytoplasm. Its subcellular location is the secreted. It is found in the cell surface. The catalysed reaction is (2R)-2-phosphoglycerate = phosphoenolpyruvate + H2O. It participates in carbohydrate degradation; glycolysis; pyruvate from D-glyceraldehyde 3-phosphate: step 4/5. Functionally, catalyzes the reversible conversion of 2-phosphoglycerate (2-PG) into phosphoenolpyruvate (PEP). It is essential for the degradation of carbohydrates via glycolysis. This chain is Enolase, found in Chlorobium limicola (strain DSM 245 / NBRC 103803 / 6330).